A 182-amino-acid chain; its full sequence is Putative manganese efflux pump MntP (182 aa).

Helical transmembrane passes span 3 to 23 (ILLL…SNGA), 42 to 62 (FFQG…VGFI), 65 to 85 (IDHF…IFDS), 126 to 146 (IWFS…AATF), and 161 to 181 (ILGG…HLGI).

Belongs to the MntP (TC 9.B.29) family.

The protein localises to the cell inner membrane. Its function is as follows. Probably functions as a manganese efflux pump. The chain is Putative manganese efflux pump MntP from Campylobacter hominis (strain ATCC BAA-381 / DSM 21671 / CCUG 45161 / LMG 19568 / NCTC 13146 / CH001A).